The chain runs to 334 residues: MLTYAQAGVDDEKTSRALKSIISLAKGTFEFRRGKLGEPAEDLGHYAALMDFGDFYLAITTDGVGTKVLVAEAVGKFDTIGIDMIAMNVNDLLCVGAEPVALVDYLAVKEPDERVFEGIAQGLYEGARQAGIAIVGGETAVMPDLINGFDLAGTAIGVVEKRKVITGKKIRPGDAVIGIKSSGIHSNGLTLARKLLIPKYGLDYEYEGKKLWEWLLEPTRIYVKAVLELIENVKVHGLAHITGGGLLNLKRLTSFGFSIEMPPIEGIFRLIYENGVPLEEMFRVFNMGVGMVAVVPREEKEEALQLLNRHFESFELGKVVGEPGIRVENYGIKL.

The protein belongs to the AIR synthase family.

Its subcellular location is the cytoplasm. The enzyme catalyses 2-formamido-N(1)-(5-O-phospho-beta-D-ribosyl)acetamidine + ATP = 5-amino-1-(5-phospho-beta-D-ribosyl)imidazole + ADP + phosphate + H(+). It participates in purine metabolism; IMP biosynthesis via de novo pathway; 5-amino-1-(5-phospho-D-ribosyl)imidazole from N(2)-formyl-N(1)-(5-phospho-D-ribosyl)glycinamide: step 2/2. The sequence is that of Phosphoribosylformylglycinamidine cyclo-ligase from Thermococcus kodakarensis (strain ATCC BAA-918 / JCM 12380 / KOD1) (Pyrococcus kodakaraensis (strain KOD1)).